A 266-amino-acid polypeptide reads, in one-letter code: MVVSNGVATKGVLEAQGVNVYYGSHLAVKDCNISIPERRVVAFIGPSGCGKSTLLRCFNRMNDLVSIARVEGRITYHGSDIYAPSVDPVGLRCSIGMVFQKANPFPKSIYENIAWGAKLNNFQGDMDELVETSLRRAALWDEVKDKLKASGFSLSGGQQQRLCIARAIAVQPEVILMDEPCSALDPISTLKIEGLMHELKEQFTIVIVTHNMQQASRVSDYTAFFNVESVDRGAKVGSLVEYGPTEEIFQNPLKESTRDYVSGRFG.

One can recognise an ABC transporter domain in the interval 13–252; sequence LEAQGVNVYY…GPTEEIFQNP (240 aa). 45–52 contributes to the ATP binding site; sequence GPSGCGKS.

Belongs to the ABC transporter superfamily. Phosphate importer (TC 3.A.1.7) family. As to quaternary structure, the complex is composed of two ATP-binding proteins (PstB), two transmembrane proteins (PstC and PstA) and a solute-binding protein (PstS).

It localises to the cell inner membrane. It carries out the reaction phosphate(out) + ATP + H2O = ADP + 2 phosphate(in) + H(+). Functionally, part of the ABC transporter complex PstSACB involved in phosphate import. Responsible for energy coupling to the transport system. The sequence is that of Phosphate import ATP-binding protein PstB 2 from Synechocystis sp. (strain ATCC 27184 / PCC 6803 / Kazusa).